Here is a 233-residue protein sequence, read N- to C-terminus: Orotidine 5'-phosphate decarboxylase (233 aa).

Residues aspartate 11, lysine 34, 61 to 70 (DLKLHDIPNT), threonine 117, arginine 179, glutamine 188, glycine 208, and arginine 209 each bind substrate. Residue lysine 63 is the Proton donor of the active site.

It belongs to the OMP decarboxylase family. Type 1 subfamily. In terms of assembly, homodimer.

The catalysed reaction is orotidine 5'-phosphate + H(+) = UMP + CO2. It participates in pyrimidine metabolism; UMP biosynthesis via de novo pathway; UMP from orotate: step 2/2. In terms of biological role, catalyzes the decarboxylation of orotidine 5'-monophosphate (OMP) to uridine 5'-monophosphate (UMP). In Streptococcus pneumoniae (strain Hungary19A-6), this protein is Orotidine 5'-phosphate decarboxylase.